The chain runs to 353 residues: Photosystem II protein D1 (353 aa).

The residue at position 2 (Thr-2) is an N-acetylthreonine. Thr-2 is modified (phosphothreonine). 3 consecutive transmembrane segments (helical) span residues 29 to 46 (YIGW…TATS), 118 to 133 (HFLL…EWEL), and 142 to 156 (WIAV…AATA). His-118 is a binding site for chlorophyll a. Tyr-126 contributes to the pheophytin a binding site. Residues Asp-170 and Glu-189 each coordinate [CaMn4O5] cluster. Residues 197–218 (FHMLGVAGVFGGSLFSAMHGSL) traverse the membrane as a helical segment. His-198 lines the chlorophyll a pocket. A quinone-binding positions include His-215 and 264 to 265 (SF). His-215 is a Fe cation binding site. Residue His-272 coordinates Fe cation. The chain crosses the membrane as a helical span at residues 274–288 (FLAAWPVVGIWFTSL). Residues His-332, Glu-333, Asp-342, and Ala-344 each contribute to the [CaMn4O5] cluster site. The propeptide occupies 345 to 353 (AIDAPSVNG).

The protein belongs to the reaction center PufL/M/PsbA/D family. In terms of assembly, PSII is composed of 1 copy each of membrane proteins PsbA, PsbB, PsbC, PsbD, PsbE, PsbF, PsbH, PsbI, PsbJ, PsbK, PsbL, PsbM, PsbT, PsbX, PsbY, PsbZ, Psb30/Ycf12, at least 3 peripheral proteins of the oxygen-evolving complex and a large number of cofactors. It forms dimeric complexes. The D1/D2 heterodimer binds P680, chlorophylls that are the primary electron donor of PSII, and subsequent electron acceptors. It shares a non-heme iron and each subunit binds pheophytin, quinone, additional chlorophylls, carotenoids and lipids. D1 provides most of the ligands for the Mn4-Ca-O5 cluster of the oxygen-evolving complex (OEC). There is also a Cl(-1) ion associated with D1 and D2, which is required for oxygen evolution. The PSII complex binds additional chlorophylls, carotenoids and specific lipids. is required as a cofactor. Post-translationally, tyr-161 forms a radical intermediate that is referred to as redox-active TyrZ, YZ or Y-Z. In terms of processing, C-terminally processed by CTPA; processing is essential to allow assembly of the oxygen-evolving complex and thus photosynthetic growth.

It is found in the plastid. It localises to the chloroplast thylakoid membrane. The enzyme catalyses 2 a plastoquinone + 4 hnu + 2 H2O = 2 a plastoquinol + O2. Its function is as follows. Photosystem II (PSII) is a light-driven water:plastoquinone oxidoreductase that uses light energy to abstract electrons from H(2)O, generating O(2) and a proton gradient subsequently used for ATP formation. It consists of a core antenna complex that captures photons, and an electron transfer chain that converts photonic excitation into a charge separation. The D1/D2 (PsbA/PsbD) reaction center heterodimer binds P680, the primary electron donor of PSII as well as several subsequent electron acceptors. The chain is Photosystem II protein D1 from Coffea arabica (Arabian coffee).